The primary structure comprises 461 residues: Vimentin (461 aa).

Composition is skewed to low complexity over residues 1–14 (MNRTTSRQTTSSSS) and 35–52 (SSRQYSSPVRSSRMSYSV). A disordered region spans residues 1–52 (MNRTTSRQTTSSSSYKRMFGGEGRPSVGMARSTLSSRQYSSPVRSSRMSYSV). The tract at residues 1-91 (MNRTTSRQTT…FALSDAINSE (91 aa)) is head. Residues 92–127 (FKANRTNEKAEMQHLNDRFASYIDKVRFLEQQNKIL) are coil 1A. A coiled-coil region spans residues 92–127 (FKANRTNEKAEMQHLNDRFASYIDKVRFLEQQNKIL). The IF rod domain occupies 99-407 (EKAEMQHLND…KLLEGEESRI (309 aa)). A linker 1 region spans residues 128–149 (LAELEQLKGKGASRIGDLYEDE). The stretch at 150–241 (MRDLRRQVDQ…KLHDEEVAEL (92 aa)) forms a coiled coil. Residues 150–241 (MRDLRRQVDQ…KLHDEEVAEL (92 aa)) form a coil 1B region. The segment at 242–264 (QAQIQDQHVQIDMDVAKPDLTAA) is linker 12. The coil 2 stretch occupies residues 265–403 (LRDVRVQYET…ATYRKLLEGE (139 aa)). Residues 299–403 (NRNTDAIRQA…ATYRKLLEGE (105 aa)) are a coiled coil. Residues 404–461 (ESRITTPMPNFSSFNLRESMLEARPMIDNLSKKVVIKTIETRDGHVINESTQNHDDLE) form a tail region.

Belongs to the intermediate filament family. In terms of assembly, homomer assembled from elementary dimers. In terms of processing, one of the most prominent phosphoproteins in various cells of mesenchymal origin. Phosphorylation is enhanced during cell division, at which time vimentin filaments are significantly reorganized.

It is found in the cytoplasm. Its subcellular location is the cytoskeleton. It localises to the nucleus matrix. Functionally, vimentins are class-III intermediate filaments found in various non-epithelial cells, especially mesenchymal cells. Vimentin is attached to the nucleus, endoplasmic reticulum, and mitochondria, either laterally or terminally. The chain is Vimentin (vim) from Oncorhynchus mykiss (Rainbow trout).